The following is a 3133-amino-acid chain: MTENIDKNDDDVAVIGIGLRFPSGNLKESISKPNQLFNELLNGLDGIVTTSERWSDNYYLNGEVVSKFAGLLPLDEWKQFDPIFFAINPSYDNVSSIDPQQRLLLKCVWEALEDSGIDPISLRGTNTSTFIGSSTIDYNDLQKSPFETQNNIFGSTTHSIANRIGFSFDFRGENLTIDTACSSSSNAINCGYNSIKSNKSNVSIVGGVNFILNPYISKSFTQLDMLSPTGKCHTFSSDADGFVRSEGVGIVVLKKLKDAIKDSNNIYCVIKGSSSNIDGNFDKLNFYSPSKLSQFENIKLAIKSTNGQINESDIDYCETHGTGTPTGDPIELEGISRAFNNKASTTNNNKQVLVGSFKSNIGHTEACSGVASLIKCCLMFKNKLFLQNINFKEPNPLINFKEWGLKVVTEPIKFNENKPTVMLINNFGITGSNVCLILSEFSGYQFGYSKSNDYQKMEIDNKFNEKKKYLIPLSSNSSTSLDNYKLSIIKHLNSRSSSSSTTTSFEEFVYNQIKFKSTSLIQKSVIIASDWNEFQDENNQIKLENSDNLISNITVEKKKSPIIVMVLCGQGSQYNKMALSLYDNEPIFRESVNRFDKELFKYYGYSVLDKLRSIDDKDLISIHQSILAQPATVIIQVSLYELYKHRGVSADIIIGHSLGEISSAYCSGMIDFQTLCYLTYHRSVAQNRTSGTGKMLSVNISSDEFINSYQSTTKYESLEIACYNSPTSIVIAGKEDLLNEITKDFKTNDIFCAMLGSLSSFHTSSQQMIKDEVCSLNISSKQSSIAIFSTVTTNLFNDETSPFDADYVFDNIRQPVRFTQTITNLYKYFESNDMGNEITFIEVSPHPTLQFYLNQMKSTQSSYFNSGKNITIYSPLNKKKNDYNEFLKTISLLYVNNNLNINFKSQLIDNNNNYTNQFNNLPLYQWDDKEYFKISWFQEKIKNEGPSIHSLGNNTDSPYPSYQTFIDIKKSPFQWLKGHQVSDKFYYPGMGYVHNLLSIYPNQDITISSLEFKSPLILTEGNRQCLQTTIAPLSKNEFNIKSHYKDQKTNQWILTSLGNFSLSKHNIENNEPINIRALKDKCNFTCISKQDLYETVRIKTNLTYKGLFQGVKQCYIGNNCSLAIVSLNEIYNQKEYNHLINNSNMNTLFNTAILDTCLHGVLGVVTQPVVLDRIEGFKFYSSNTPSFNNNSTNSNNDTINELYVYSENKARINSKTYSGSIKIILPNGTLLIDIGNVVCTIVASNPDSTIICEPPSNKIYTPYLQSKDSVIKNPEQFKHLYRVDEFSFKNEENQFISIGLLLSLFYKHINNRCPSINLESLETLEYDQFKQLYYNSSRNENLFKFIFENLKNYQNIMYSNSFNKTILFNNNNNNNNNNNNNNNNNNNNNNNNNNNNNNNNNNDNDNDNNCYNYENFYIRTTKIMAKQLFPLKDDDSITDTPQSLFESGYLDYHYKNSKIVQPLNNLLGEIIVETLKPILNEPIVFRILEAGGGTGSLSLLILEKICKLLNENNSTSIIDIEFTWSDISASFFAEIKEKFSSFTNHNSLNIIYRVLDLEKPLLDQDLKASYYDFVVMSNVMHVVKKLKPTLNEIHNILAPNGQLLFVEPPYKSFFIDSIFGCFSQWWPSSDSDIELRPDRCCMEQEKWISLLNQCTYRDTVLYGNDKLLFLIQTRKPTINEIISEQSISLDQLNSFNNIILFSSNNNNDNNNNSNNYYNNRNSYSSSSIQNLIRLNQELKHKIININNYNEFQSWITNNQNKDNCGNKTLIIFLKSIESIMNTSNFKEITFEYIQINQLILKLELSNSFKHLLLSLNSTTDNYLSSSIVGAARYFVEFPQLDLYILNYDNISIENNQQLLSLINYLIDSNNNIQKEFTIINNKVYYERYCRRSNNIKSKLQSKSFETNKDNLFIQLNSNLEYQLYSKKDELNSNEVEIEIKATSINYKDYLMYIGMIGTDIDIKYGKEYEIENGIGIDNPKIGNDFSGIITRLGCNVKDFKVGDQVCGVGSKTNSSHIIVDYNYIYYKPLNYSYSVSASIPSVYITSLHSIYNIGNLKSNESILIHSAAGGIGISSLDLLKSKQHQGYIFLTVGSKDKEEYLIKKYGSLITAIYSSRNKNYVKDIKNKLIELGEVEQHQQQGVDLILNTLSSEFMDSNFQCLNLSGRIVDLSITHLTPNDYMTNNHYKFNVGYFNVEVIDFPGKLIKSYIKKIIKMINSNKLEPSVPIIEYSNNQFKDAIEYINQRKHIGKIIVNHNQDEFNRIYNIYQNNNNQIMKHSYDISKLNIGKNILLTGQTGIVLEILKYLVKYSNHSIENIIILSKSKLKWELELLINQTKFKKDNIIKFHFNQIDIEDSTKVNQVLNQLELNENITNIDSIIHFAFMNDICDVQKVDMNRLNITHGAKTIGAINLHNQSINRSWNIKQFIMASSVVSIFGSDKQCCYVSACNVIDSLSKYRHSIGLPSLAINLGAISSTGFVSRNNAIETMLKSTLSNLFSPQLVISSLDLFIQNQHQYPNYCLSDFNFEVLPSTLTNQHHSKFDFEINIVKKSNQIKSFSGDDNNNEIIRSTILNKISEILSIDESKINEDLQLSQYGMDSLVIVQLKNFVDNQLGHNIITIQQLQNNKINQSIEIIKSAHNKNKNNNNNNNNNSNHHDNIKKEQQSLDEFIKNETKLNESIISRPYSIKNILNNNNNNNNNNNNNNNNNNNNNNNNNNNNCQSIFLTGSTGFLGAYLLIELIKVNNISKIYCLIRNNSKLTNPIDVIINNLKKHQLIDMNKESPKRKTKIINHTGNISNDKLNSSNSNSDNSNNNNNQINEDQLIKIIPIIGDISKDKFGLTEQDYLKLSNECDIIINSAADINLKSNYEESKTVNVNSVNQIIKLSVSNNSSQKLIVHFSSLAVFINHPFKDEEDFEETNSVPSFNSTPIGYIQSKVISEKLITNAAESRGIPSIIIRPPDIFSNPITGIGHSNDFISLLIKASKEIGYYPNIHKSIFSTPVTTIAKTTIDLIFNENSWNQNKSKPISIYNFNGNSMEMKSFYRVLENNFKCKEIDFDEWIELVSKSNGKSSKRYSTFHIHKNQNLLLTTFTINSLLKMSNSTKELLTSIGSYNHQDWEINESMILNDIINNH.

Residues 9–440 enclose the Ketosynthase family 3 (KS3) domain; the sequence is DDDVAVIGIG…GSNVCLILSE (432 aa). Catalysis depends on for beta-ketoacyl synthase activity residues Cys-181, His-320, and His-363. Residues 647-680 are acyl/malonyl transferase; sequence GVSADIIIGHSLGEISSAYCSGMIDFQTLCYLTY. Catalysis depends on Ser-657, which acts as the For acyl/malonyl transferase activity. Positions 945–1067 are N-terminal hotdog fold; sequence GPSIHSLGNN…GNFSLSKHNI (123 aa). One can recognise a PKS/mFAS DH domain in the interval 945 to 1248; sequence GPSIHSLGNN…CTIVASNPDS (304 aa). The active-site Proton acceptor; for dehydratase activity is His-979. The tract at residues 1083–1248 is C-terminal hotdog fold; it reads NFTCISKQDL…CTIVASNPDS (166 aa). Asp-1155 acts as the Proton donor; for dehydratase activity in catalysis. Residues 1370-1408 form a disordered region; it reads NNNNNNNNNNNNNNNNNNNNNNNNNNNNNNNNNDNDNDN. Positions 2562–2639 constitute a Carrier domain; that stretch reads NNNEIIRSTI…QSIEIIKSAH (78 aa). Position 2599 is an O-(pantetheine 4'-phosphoryl)serine (Ser-2599). Positions 2649–2711 form a coiled coil; sequence NNNNSNHHDN…NNNNNNNNNN (63 aa). Disordered regions lie at residues 2691 to 2715 and 2794 to 2817; these read LNNN…NNNN and GNIS…NNNQ. Composition is skewed to low complexity over residues 2692-2715 and 2795-2817; these read NNNN…NNNN and NISN…NNNQ.

Pantetheine 4'-phosphate is required as a cofactor.

Probable polyketide synthase. The protein is Probable polyketide synthase 38 (pks38) of Dictyostelium discoideum (Social amoeba).